Consider the following 688-residue polypeptide: Coiled-coil domain-containing protein 157 (688 aa).

Positions 143 to 153 are enriched in polar residues; it reads ANQGETLTSKP. 5 disordered regions span residues 143–162, 168–189, 322–341, 366–385, and 592–688; these read ANQGETLTSKPTAKGEPAGS, AQLVKPPSPVPGLPQACPERDS, QAARQRQAQEAEQHRAQWER, QQRESTQAVESKAQQLQAEA, and QGAE…ERPT. Positions 288 to 572 form a coiled coil; sequence KLVGLLRAQL…LSKIREVAQQ (285 aa). A compositionally biased stretch (polar residues) spans 369–382; sequence ESTQAVESKAQQLQ. The span at 671-680 shows a compositional bias: low complexity; the sequence is SPSSGRASPA.

This Bos taurus (Bovine) protein is Coiled-coil domain-containing protein 157 (CCDC157).